A 652-amino-acid chain; its full sequence is MNNIKSFFGKKKKTQDQAEPLVIGDDSEKRTVILPPPSPNAVKRKNKNEKPYSIDLNGVGEVGGKVYNNVVGVFADGNDTGEISPTIYCVSDFQGLLKNDRKWIQYSELPEGYTVFYFQTILCVLNFLRRREFVHYIYVDKFEQILEMNENNENIITTVIPTNPIDENDKINSKSINDGDDNGGGSGGGGDNSPLTNVILPTITTTDTTTTSITISPPPKNHLSLLEEDIKNNQNLHHKQQQLQQLQQLKQQHLQQQQKLKQEQQQEQQQQQEDEPNKSPVSTSSTLSPQLESTNFEMTNDDTSLNAPNAMLTPNNISGISYSIIYPGKKKRIDFSRIFVSPGHSFRFPEEYDKALEKHLNEGNPKEHFKNLDFEARGGFGSVFCAKNKNPHSAYDKQMVALKKMPIKTLRHKRMNLSEIGFLKYFNHPNIVKFLCAYQKSNDELWMIMEFLSGGTLKNAASNFKFCERKIAYVCREILQGLDYLHKQNIAHRDLKSANVMVNDKGEIKLIDFGLCIDFSIEKEEINMLGSPSYISPEMINGNPHSLSTDIWSFGICALEMLLGKLPYHDSRLKAMVFVATNNLNLPLLLSTTTSSLEFRDFLTNCLQFDPSKRLTSSQLLQHPFLTKACPIKDFKEILPALYMSNTLSNMF.

Disordered stretches follow at residues 1-47, 163-198, and 257-289; these read MNNI…RKNK, NPID…LTNV, and QQKL…TLSP. Over residues 182-191 the composition is skewed to gly residues; that stretch reads NGGGSGGGGD. Residues 231–275 are a coiled coil; the sequence is KNNQNLHHKQQQLQQLQQLKQQHLQQQQKLKQEQQQEQQQQQEDE. A compositionally biased stretch (low complexity) spans 257–271; that stretch reads QQKLKQEQQQEQQQQ. Positions 279–289 are enriched in polar residues; it reads SPVSTSSTLSP. The 258-residue stretch at 369-626 folds into the Protein kinase domain; it reads FKNLDFEARG…SSQLLQHPFL (258 aa). ATP-binding positions include 375-383 and Lys-403; that span reads EARGGFGSV. Asp-494 (proton acceptor) is an active-site residue.

The protein belongs to the protein kinase superfamily. STE Ser/Thr protein kinase family. STE20 subfamily. Mg(2+) is required as a cofactor.

The enzyme catalyses L-seryl-[protein] + ATP = O-phospho-L-seryl-[protein] + ADP + H(+). It carries out the reaction L-threonyl-[protein] + ATP = O-phospho-L-threonyl-[protein] + ADP + H(+). The polypeptide is Probable serine/threonine-protein kinase mkcD (Dictyostelium discoideum (Social amoeba)).